An 82-amino-acid chain; its full sequence is Small ribosomal subunit protein uS17 (82 aa).

The protein belongs to the universal ribosomal protein uS17 family. As to quaternary structure, part of the 30S ribosomal subunit.

In terms of biological role, one of the primary rRNA binding proteins, it binds specifically to the 5'-end of 16S ribosomal RNA. The polypeptide is Small ribosomal subunit protein uS17 (Rhodopseudomonas palustris (strain TIE-1)).